Reading from the N-terminus, the 518-residue chain is Glutamate--cysteine ligase (518 aa).

The protein belongs to the glutamate--cysteine ligase type 1 family. Type 1 subfamily.

It catalyses the reaction L-cysteine + L-glutamate + ATP = gamma-L-glutamyl-L-cysteine + ADP + phosphate + H(+). Its pathway is sulfur metabolism; glutathione biosynthesis; glutathione from L-cysteine and L-glutamate: step 1/2. The polypeptide is Glutamate--cysteine ligase (Klebsiella pneumoniae (strain 342)).